Consider the following 920-residue polypeptide: Isoleucine--tRNA ligase (920 aa).

Residues 57 to 67 (PYANGDIHLGH) carry the 'HIGH' region motif. Residue Glu-560 coordinates L-isoleucyl-5'-AMP. Positions 601-605 (KMSKS) match the 'KMSKS' region motif. ATP is bound at residue Lys-604. Cys-890, Cys-893, Cys-910, and Cys-913 together coordinate Zn(2+).

It belongs to the class-I aminoacyl-tRNA synthetase family. IleS type 1 subfamily. Monomer. Zn(2+) is required as a cofactor.

The protein resides in the cytoplasm. It carries out the reaction tRNA(Ile) + L-isoleucine + ATP = L-isoleucyl-tRNA(Ile) + AMP + diphosphate. Catalyzes the attachment of isoleucine to tRNA(Ile). As IleRS can inadvertently accommodate and process structurally similar amino acids such as valine, to avoid such errors it has two additional distinct tRNA(Ile)-dependent editing activities. One activity is designated as 'pretransfer' editing and involves the hydrolysis of activated Val-AMP. The other activity is designated 'posttransfer' editing and involves deacylation of mischarged Val-tRNA(Ile). In Caldicellulosiruptor saccharolyticus (strain ATCC 43494 / DSM 8903 / Tp8T 6331), this protein is Isoleucine--tRNA ligase.